The sequence spans 377 residues: Mucin-7 (377 aa).

The N-terminal stretch at 1–22 (MKTLPLFVCICALSACFSFSEG) is a signal peptide. A disordered region spans residues 70-100 (CRPKLPPSPNNPPKFPNPHQPPKHPDKNSSV). Positions 73-89 (KLPPSPNNPPKFPNPHQ) are enriched in pro residues. N-linked (GlcNAc...) asparagine glycans are attached at residues N97, N128, N135, and N146. The interval 150 to 355 (SVATLAPVNS…QPTSAPGQNK (206 aa)) is disordered. Tandem repeats lie at residues 165 to 187 (TTAAPPTPSATTPAPPSSSAPPE), 188 to 210 (TTAAPPTPSATTQAPPSSSAPPE), 211 to 233 (TTAAPPTPPATTPAPPSSSAPPE), 234 to 256 (TTAAPPTPSATTPAPLSSSAPPE), 257 to 279 (TTAVPPTPSATTLDPSSASAPPE), and 280 to 302 (TTAAPPTPSATTPAPPSSPAPQE). Over residues 169-183 (PPTPSATTPAPPSSS) the composition is skewed to pro residues. T176 is a glycosylation site (O-linked (GalNAc) threonine; by GALNT13). S182 and S183 each carry an O-linked (GalNAc) serine; by GALNT13 glycan. Low complexity predominate over residues 184-214 (APPETTAAPPTPSATTQAPPSSSAPPETTAA). O-linked (GalNAc) threonine; by GALNT13 glycans are attached at residues T188 and T189. The segment covering 215–229 (PPTPPATTPAPPSSS) has biased composition (pro residues). The span at 230–283 (APPETTAAPPTPSATTPAPLSSSAPPETTAVPPTPSATTLDPSSASAPPETTAA) shows a compositional bias: low complexity. The span at 284-298 (PPTPSATTPAPPSSP) shows a compositional bias: pro residues. Over residues 309–329 (TTPNSSPTTLAPDTSETSAAP) the composition is skewed to polar residues. Over residues 330 to 348 (THQTTTSVTTQTTTTKQPT) the composition is skewed to low complexity.

Monomer. Post-translationally, N- and O-glycosylated. Contains fucose, mannose, galactose, N-acetylglucosamine and N-acetylgalactosamine. In terms of tissue distribution, expressed in salivary gland tissues and only in those that contain mucous acinar cells (e.g. sublingual and submandibular glands) and not in salivary glands containing only serous acinar cells (e.g. parotid gland).

Its subcellular location is the secreted. May function in a protective capacity by promoting the clearance of bacteria in the oral cavity and aiding in mastication, speech, and swallowing. Binds P.aeruginosa pili. In Homo sapiens (Human), this protein is Mucin-7 (MUC7).